A 392-amino-acid chain; its full sequence is Dual-specificity RNA methyltransferase RlmN (392 aa).

Catalysis depends on Glu-116, which acts as the Proton acceptor. Positions 122 to 364 constitute a Radical SAM core domain; sequence EEGRGTLCVS…SPIRTPRGED (243 aa). Cys-129 and Cys-369 form a disulfide bridge. 3 residues coordinate [4Fe-4S] cluster: Cys-136, Cys-140, and Cys-143. S-adenosyl-L-methionine contacts are provided by residues 195–196, Ser-227, 249–251, and Asn-326; these read GE and SFH. Cys-369 acts as the S-methylcysteine intermediate in catalysis.

It belongs to the radical SAM superfamily. RlmN family. It depends on [4Fe-4S] cluster as a cofactor.

Its subcellular location is the cytoplasm. The catalysed reaction is adenosine(2503) in 23S rRNA + 2 reduced [2Fe-2S]-[ferredoxin] + 2 S-adenosyl-L-methionine = 2-methyladenosine(2503) in 23S rRNA + 5'-deoxyadenosine + L-methionine + 2 oxidized [2Fe-2S]-[ferredoxin] + S-adenosyl-L-homocysteine. The enzyme catalyses adenosine(37) in tRNA + 2 reduced [2Fe-2S]-[ferredoxin] + 2 S-adenosyl-L-methionine = 2-methyladenosine(37) in tRNA + 5'-deoxyadenosine + L-methionine + 2 oxidized [2Fe-2S]-[ferredoxin] + S-adenosyl-L-homocysteine. Functionally, specifically methylates position 2 of adenine 2503 in 23S rRNA and position 2 of adenine 37 in tRNAs. m2A2503 modification seems to play a crucial role in the proofreading step occurring at the peptidyl transferase center and thus would serve to optimize ribosomal fidelity. The sequence is that of Dual-specificity RNA methyltransferase RlmN from Cereibacter sphaeroides (strain ATCC 17029 / ATH 2.4.9) (Rhodobacter sphaeroides).